The primary structure comprises 307 residues: Acetyl-coenzyme A carboxylase carboxyl transferase subunit beta (307 aa).

Residues Met-1–Ser-26 form a disordered region. A compositionally biased stretch (basic and acidic residues) spans Gln-7–Gly-21. The region spanning Leu-45–Ala-307 is the CoA carboxyltransferase N-terminal domain.

The protein belongs to the AccD/PCCB family. Acetyl-CoA carboxylase is a heterohexamer composed of biotin carboxyl carrier protein (AccB), biotin carboxylase (AccC) and two subunits each of ACCase subunit alpha (AccA) and ACCase subunit beta (AccD).

Its subcellular location is the cytoplasm. It catalyses the reaction N(6)-carboxybiotinyl-L-lysyl-[protein] + acetyl-CoA = N(6)-biotinyl-L-lysyl-[protein] + malonyl-CoA. The protein operates within lipid metabolism; malonyl-CoA biosynthesis; malonyl-CoA from acetyl-CoA: step 1/1. In terms of biological role, component of the acetyl coenzyme A carboxylase (ACC) complex. Biotin carboxylase (BC) catalyzes the carboxylation of biotin on its carrier protein (BCCP) and then the CO(2) group is transferred by the transcarboxylase to acetyl-CoA to form malonyl-CoA. In Caulobacter vibrioides (strain ATCC 19089 / CIP 103742 / CB 15) (Caulobacter crescentus), this protein is Acetyl-coenzyme A carboxylase carboxyl transferase subunit beta.